The following is a 230-amino-acid chain: Flagellar L-ring protein (230 aa).

Residues 1–15 form the signal peptide; sequence MSRLPSLSSLCLAIA. A lipid anchor (N-palmitoyl cysteine) is attached at C16. C16 is lipidated: S-diacylglycerol cysteine.

The protein belongs to the FlgH family. As to quaternary structure, the basal body constitutes a major portion of the flagellar organelle and consists of four rings (L,P,S, and M) mounted on a central rod.

The protein localises to the cell outer membrane. It is found in the bacterial flagellum basal body. Assembles around the rod to form the L-ring and probably protects the motor/basal body from shearing forces during rotation. The sequence is that of Flagellar L-ring protein from Xanthomonas campestris pv. campestris (strain 8004).